Consider the following 106-residue polypeptide: Phosphoribosyl-ATP pyrophosphatase (106 aa).

The protein belongs to the PRA-PH family.

The protein localises to the cytoplasm. It catalyses the reaction 1-(5-phospho-beta-D-ribosyl)-ATP + H2O = 1-(5-phospho-beta-D-ribosyl)-5'-AMP + diphosphate + H(+). Its pathway is amino-acid biosynthesis; L-histidine biosynthesis; L-histidine from 5-phospho-alpha-D-ribose 1-diphosphate: step 2/9. The polypeptide is Phosphoribosyl-ATP pyrophosphatase (Methylobacillus flagellatus (strain ATCC 51484 / DSM 6875 / VKM B-1610 / KT)).